The chain runs to 211 residues: Ras-related protein Rab-38 (211 aa).

Residues glycine 19, valine 20, glycine 21, lysine 22, threonine 23, serine 24, serine 35, serine 36, tyrosine 38, and threonine 41 each coordinate GTP. Threonine 23 is a Mg(2+) binding site. Residues 32–46 (QNFSSHYRATIGVDF) carry the Switch 1 motif. Mg(2+) is bound by residues threonine 41 and aspartate 65. Residues glycine 68, lysine 128, aspartate 130, alanine 160, and lysine 161 each coordinate GTP. Positions 68-81 (GQERFGNMTRVYYR) match the Switch 2 motif. A lipid anchor (S-palmitoyl cysteine) is attached at cysteine 205. Residue cysteine 208 is the site of S-geranylgeranyl cysteine attachment.

The protein belongs to the small GTPase superfamily. Rab family. As to quaternary structure, interacts with ANKRD27. It depends on Mg(2+) as a cofactor.

The protein localises to the cell membrane. It is found in the cytoplasmic vesicle. The protein resides in the phagosome. Its subcellular location is the phagosome membrane. It localises to the melanosome. The protein localises to the melanosome membrane. It carries out the reaction GTP + H2O = GDP + phosphate + H(+). Its activity is regulated as follows. Regulated by guanine nucleotide exchange factors (GEFs) including the BLOC-3 complex composed of HPS1 and HPS4 which promote the exchange of bound GDP for free GTP. Regulated by GTPase activating proteins (GAPs) including SGSM2 which increase the GTP hydrolysis activity. Inhibited by GDP dissociation inhibitors (GDIs). The small GTPases Rab are key regulators of intracellular membrane trafficking, from the formation of transport vesicles to their fusion with membranes. Rabs cycle between an inactive GDP-bound form and an active GTP-bound form that is able to recruit to membranes different sets of downstream effectors directly responsible for vesicle formation, movement, tethering and fusion. RAB38 plays a role in the maturation of phagosomes that engulf pathogens, such as S.aureus and Mycobacterium. May be involved in melanosomal transport and docking. Involved in the proper sorting of TYRP1. Involved in peripheral melanosomal distribution of TYRP1 in melanocytes; the function, which probably is implicating vesicle-trafficking, includes cooperation with ANKRD27 and VAMP7. Plays an important role in the control of melanin production and melanosome biogenesis. In concert with RAB32, regulates the proper trafficking of melanogenic enzymes TYR, TYRP1 and DCT/TYRP2 to melanosomes in melanocytes. The polypeptide is Ras-related protein Rab-38 (Mus musculus (Mouse)).